The following is a 464-amino-acid chain: Fumarate hydratase class II (464 aa).

Substrate-binding positions include 98 to 100 (SGT), 129 to 132 (HPND), 139 to 141 (SSN), and Thr187. Residue His188 is the Proton donor/acceptor of the active site. Ser318 is an active-site residue. Residues Ser319 and 324–326 (KVN) each bind substrate.

It belongs to the class-II fumarase/aspartase family. Fumarase subfamily. In terms of assembly, homotetramer.

It localises to the cytoplasm. The catalysed reaction is (S)-malate = fumarate + H2O. The protein operates within carbohydrate metabolism; tricarboxylic acid cycle; (S)-malate from fumarate: step 1/1. Its function is as follows. Involved in the TCA cycle. Catalyzes the stereospecific interconversion of fumarate to L-malate. This chain is Fumarate hydratase class II, found in Haemophilus influenzae (strain ATCC 51907 / DSM 11121 / KW20 / Rd).